Consider the following 313-residue polypeptide: uncharacterized protein (313 aa).

A signal peptide spans 1 to 24 (MKRRRRWRGWLLFLALCFCLLCEA). 14 N-linked (GlcNAc...) asparagine; by host glycosylation sites follow: asparagine 28, asparagine 43, asparagine 57, asparagine 77, asparagine 101, asparagine 102, asparagine 109, asparagine 149, asparagine 168, asparagine 215, asparagine 222, asparagine 251, asparagine 254, and asparagine 267. Positions 47 to 73 (ATTGTTTTSPNVTSTTSNTVTTPTTVS) are disordered. Over residues 90–114 (STVSGTRNTRNNNTTTIGTNATSPS) the composition is skewed to low complexity. The interval 90–117 (STVSGTRNTRNNNTTTIGTNATSPSSSV) is disordered.

Belongs to the HHV-5 US34A protein family.

This is an uncharacterized protein from Homo sapiens (Human).